Here is a 699-residue protein sequence, read N- to C-terminus: Receptor-type tyrosine-protein phosphatase epsilon (699 aa).

Positions 1-22 are cleaved as a signal peptide; sequence MEPFCPLLLASFSLSLATAGQG. Residues 20–36 show a composition bias toward low complexity; sequence GQGNDTTPTESNWTSTT. A disordered region spans residues 20–41; sequence GQGNDTTPTESNWTSTTAGPPD. Residues N23 and N31 are each glycosylated (N-linked (GlcNAc...) asparagine). Residues 23–47 lie on the Extracellular side of the membrane; the sequence is NDTTPTESNWTSTTAGPPDPGTSQP. Residues 48-68 traverse the membrane as a helical segment; the sequence is LLTWLLLPLLLLLFLLAAYFF. At 69-699 the chain is on the cytoplasmic side; the sequence is RFRKQRKAVV…DIFSDYANFK (631 aa). 2 Tyrosine-protein phosphatase domains span residues 134-393 and 425-688; these read FREE…LLEY and LEEE…VQDF. Residues D302, 334–340, and Q378 contribute to the substrate site; that span reads CSAGVGR. The active-site Phosphocysteine intermediate is C334. C629 functions as the Phosphocysteine intermediate in the catalytic mechanism. At Y695 the chain carries Phosphotyrosine.

The protein belongs to the protein-tyrosine phosphatase family. Receptor class 4 subfamily. Monomer. Isoform 2: Homodimer. Can form oligomers. Dimerization is increased by oxidative stress and decreased by EGFR. Isoform 2 interacts with GRB2. In terms of processing, a catalytically active cytoplasmic form (p65) is produced by proteolytic cleavage of either isoform 1, isoform 2 or isoform 3. Post-translationally, isoform 1 and isoform 2 are phosphorylated on tyrosine residues by tyrosine kinase Neu. N-glycosylated. Isoform 1 is highly expressed in the brain, lung, spleen and testis. Isoform 2 is highly expressed in thymus, spleen and lung. Isoform 1 and isoform 2 are expressed in primary hepatocytes.

The protein localises to the cell membrane. It is found in the cytoplasm. The catalysed reaction is O-phospho-L-tyrosyl-[protein] + H2O = L-tyrosyl-[protein] + phosphate. In terms of biological role, isoform 1 plays a critical role in signaling transduction pathways and phosphoprotein network topology in red blood cells. May play a role in osteoclast formation and function. Acts as a negative regulator of insulin receptor (IR) signaling and is involved in insulin-induced glucose metabolism mainly through direct dephosphorylation and inactivation of IR in hepatocytes and liver. Its function is as follows. Isoform 2 acts as a negative regulator of insulin receptor (IR) signaling in skeletal muscle. Regulates insulin-induced tyrosine phosphorylation of insulin receptor (IR) and insulin receptor substrate 1 (IRS-1), phosphorylation of protein kinase B and glycogen synthase kinase-3 and insulin induced stimulation of glucose uptake. Functionally, isoform 1 and isoform 2 act as a negative regulator of FceRI-mediated signal transduction leading to cytokine production and degranulation, most likely by acting at the level of SYK to affect downstream events such as phosphorylation of SLP76 and LAT and mobilization of Ca(2+). This is Receptor-type tyrosine-protein phosphatase epsilon (Ptpre) from Rattus norvegicus (Rat).